Here is a 624-residue protein sequence, read N- to C-terminus: Sodium/potassium/calcium exchanger 3 (624 aa).

The N-terminal stretch at 1-25 (RDLLLSQLCFLASVALLLWSLSSLR) is a signal peptide. The Extracellular portion of the chain corresponds to 26–88 (EQKELDLMDL…DIFSNEDRRQ (63 aa)). N-linked (GlcNAc...) asparagine glycans are attached at residues Asn-52 and Asn-67. A helical membrane pass occupies residues 89–109 (GAVVLHVLCAMYMFYALAIVC). Residues 110–133 (DDFFVPSLEKICERLHLSEDVAGA) are Cytoplasmic-facing. An Alpha-1 repeat occupies 130–170 (VAGATFMAAGSSAPELFTSVIGVFITKGDVGVGTIVGSAVF). A helical transmembrane segment spans residues 134–154 (TFMAAGSSAPELFTSVIGVFI). Residues 155–163 (TKGDVGVGT) lie on the Extracellular side of the membrane. The helical transmembrane segment at 164-184 (IVGSAVFNILCIIGVCGLFAG) threads the bilayer. Over 185–191 (QVVALSS) the chain is Cytoplasmic. A helical membrane pass occupies residues 192–212 (WCLLRDSIYYTLSVVALIVFI). Residues 213–215 (YDE) are Extracellular-facing. Residues 216 to 236 (KVSWWESLVLVLMYLIYIIIM) traverse the membrane as a helical segment. Residues 237–465 (KYNACIHQCF…WFMVTFASST (229 aa)) are Cytoplasmic-facing. Phosphoserine is present on Ser-289. Acidic residues predominate over residues 386 to 414 (AEADNETENENEDENNENDEEEDEDDDEG). The interval 386 to 421 (AEADNETENENEDENNENDEEEDEDDDEGPYTPFDP) is disordered. Residues 466–486 (LWIAAFSYMMVWMVTIIGYTL) form a helical membrane-spanning segment. Residues 487 to 491 (GIPDV) lie on the Extracellular side of the membrane. Residues 492–512 (IMGITFLAAGTSVPDCMASLI) form a helical membrane-spanning segment. Residues 499–530 (AAGTSVPDCMASLIVARQGMGDMAVSNSIGSN) form an Alpha-2 repeat. The Cytoplasmic portion of the chain corresponds to 513–530 (VARQGMGDMAVSNSIGSN). A helical membrane pass occupies residues 531 to 551 (VFDILIGLGLPWALQTLAVDY). Residues 552–561 (GSYIRLNSRG) are Extracellular-facing. Residues 562 to 582 (LIYSVGLLLASVFVTVFGVHL) form a helical membrane-spanning segment. The Cytoplasmic portion of the chain corresponds to 583–596 (NKWQLDKKLGCGCL). A helical transmembrane segment spans residues 597 to 617 (FLYGVFLCFSIMTEFNVFTFV). Over 618–624 (NLPMCGD) the chain is Extracellular.

The protein belongs to the Ca(2+):cation antiporter (CaCA) (TC 2.A.19) family. SLC24A subfamily. In terms of tissue distribution, abundant in the brain. Expressed at low levels in the aorta, uterus and intestine.

The protein localises to the cell membrane. The catalysed reaction is Ca(2+)(out) + K(+)(out) + 4 Na(+)(in) = Ca(2+)(in) + K(+)(in) + 4 Na(+)(out). Its function is as follows. Calcium, potassium:sodium antiporter that transports 1 Ca(2+) and 1 K(+) in exchange for 4 Na(+). In Rattus norvegicus (Rat), this protein is Sodium/potassium/calcium exchanger 3 (Slc24a3).